The following is a 285-amino-acid chain: 4-diphosphocytidyl-2-C-methyl-D-erythritol kinase (285 aa).

The active site involves lysine 10. 93-103 provides a ligand contact to ATP; the sequence is PIGGGLGGGSS. The active site involves aspartate 135.

It belongs to the GHMP kinase family. IspE subfamily.

It carries out the reaction 4-CDP-2-C-methyl-D-erythritol + ATP = 4-CDP-2-C-methyl-D-erythritol 2-phosphate + ADP + H(+). It participates in isoprenoid biosynthesis; isopentenyl diphosphate biosynthesis via DXP pathway; isopentenyl diphosphate from 1-deoxy-D-xylulose 5-phosphate: step 3/6. Functionally, catalyzes the phosphorylation of the position 2 hydroxy group of 4-diphosphocytidyl-2C-methyl-D-erythritol. The polypeptide is 4-diphosphocytidyl-2-C-methyl-D-erythritol kinase (Ruthia magnifica subsp. Calyptogena magnifica).